The primary structure comprises 413 residues: Putative acid phosphatase 11 (413 aa).

The Nucleophile role is filled by His35. Residue Asp315 is the Proton donor of the active site. Cys381 and Cys387 are oxidised to a cystine.

Belongs to the histidine acid phosphatase family.

It catalyses the reaction a phosphate monoester + H2O = an alcohol + phosphate. This is Putative acid phosphatase 11 (pho-11) from Caenorhabditis elegans.